Consider the following 30-residue polypeptide: U10-ctenitoxin-Co1b (30 aa).

2 disulfide bridges follow: Cys-2–Cys-17 and Cys-9–Cys-22.

Expressed by the venom gland.

It localises to the secreted. Functionally, antagonist of L-type calcium channels (Cav1/CACNA1). The sequence is that of U10-ctenitoxin-Co1b from Ctenus ornatus (Brazilian spider).